The primary structure comprises 264 residues: MGNSGFYLNDTQNCVFADNIKLGQMESPLQDQQLILGTKSTPTAAKLNAKEGLKIDISNTNAQSATIDFSIDADTLSKLILDQIQKGLVDAIIKDITNSLIQEVIDRIISDKNLALTKAFKNFSLSEKIQCNGLFTKSNIGTLLGGTEIGKFTITPDNVNSMFLISADIIASRMEGNVVLALVREGDSSPCAISYGYSSGIPNVCSLRTAVNNTGTDPVTFSLRVGGMDSGVVWVNALANGDSILGTTATSNISFLEVKQQTNG.

The polypeptide is Virulence plasmid protein pGP3-D (Chlamydia psittaci (Chlamydophila psittaci)).